The sequence spans 309 residues: Acetyl-coenzyme A carboxylase carboxyl transferase subunit beta (309 aa).

A CoA carboxyltransferase N-terminal domain is found at 29-298 (NSDWTSCCKG…AINSSENETS (270 aa)). Residues C35, C36, C52, and C55 each coordinate Zn(2+).

The protein belongs to the AccD/PCCB family. Acetyl-CoA carboxylase is a heterohexamer composed of biotin carboxyl carrier protein (AccB), biotin carboxylase (AccC) and two subunits each of ACCase subunit alpha (AccA) and ACCase subunit beta (AccD). Zn(2+) serves as cofactor.

It localises to the cytoplasm. It catalyses the reaction N(6)-carboxybiotinyl-L-lysyl-[protein] + acetyl-CoA = N(6)-biotinyl-L-lysyl-[protein] + malonyl-CoA. It functions in the pathway lipid metabolism; malonyl-CoA biosynthesis; malonyl-CoA from acetyl-CoA: step 1/1. Its function is as follows. Component of the acetyl coenzyme A carboxylase (ACC) complex. Biotin carboxylase (BC) catalyzes the carboxylation of biotin on its carrier protein (BCCP) and then the CO(2) group is transferred by the transcarboxylase to acetyl-CoA to form malonyl-CoA. The polypeptide is Acetyl-coenzyme A carboxylase carboxyl transferase subunit beta (Pelagibacter ubique (strain HTCC1062)).